We begin with the raw amino-acid sequence, 194 residues long: MISRLTGKLVEKNPPQIVIDVNGVGYEADVSMQTFYNLPPVGESVQLFTQLIIREDAHLLFGFATAEERKTFRQLIKVGGIGAKTALGILSAMTADELARAVAEEDVKRLSSAPGIGKKTAERMVLELRGKLVAHTVTDGLFAAAPAADETEDIVSTLLALGYSEREAKAAVKGVPEGTDVGEGVRLALKNLLK.

A domain I region spans residues 1-64 (MISRLTGKLV…EDAHLLFGFA (64 aa)). Residues 65–143 (TAEERKTFRQ…AHTVTDGLFA (79 aa)) form a domain II region. The interval 144–147 (AAPA) is flexible linker. The interval 147 to 194 (AADETEDIVSTLLALGYSEREAKAAVKGVPEGTDVGEGVRLALKNLLK) is domain III.

The protein belongs to the RuvA family. Homotetramer. Forms an RuvA(8)-RuvB(12)-Holliday junction (HJ) complex. HJ DNA is sandwiched between 2 RuvA tetramers; dsDNA enters through RuvA and exits via RuvB. An RuvB hexamer assembles on each DNA strand where it exits the tetramer. Each RuvB hexamer is contacted by two RuvA subunits (via domain III) on 2 adjacent RuvB subunits; this complex drives branch migration. In the full resolvosome a probable DNA-RuvA(4)-RuvB(12)-RuvC(2) complex forms which resolves the HJ.

Its subcellular location is the cytoplasm. The RuvA-RuvB-RuvC complex processes Holliday junction (HJ) DNA during genetic recombination and DNA repair, while the RuvA-RuvB complex plays an important role in the rescue of blocked DNA replication forks via replication fork reversal (RFR). RuvA specifically binds to HJ cruciform DNA, conferring on it an open structure. The RuvB hexamer acts as an ATP-dependent pump, pulling dsDNA into and through the RuvAB complex. HJ branch migration allows RuvC to scan DNA until it finds its consensus sequence, where it cleaves and resolves the cruciform DNA. This is Holliday junction branch migration complex subunit RuvA from Neisseria meningitidis serogroup B (strain ATCC BAA-335 / MC58).